We begin with the raw amino-acid sequence, 194 residues long: MSEKPTSIKLVVVGDGAVGKTCLLISYSIRKFPEDYIPTVFDNYVVSLTAGTRQIQLALWDTAGQEEYDQLRPLSYSSASIFLICFSVTSSVSYDNVITKWHPEVIHFAPKVPIILVGTKLDTRNDPAIVKRLTEQGMTVINTAKGEELKNRIKAVKYIECSAKTSENLKTVFDEAVKTVLMNKPQQRSKCALL.

GTP-binding residues include Ala17, Gly19, Lys20, Thr21, Cys22, Glu34, Tyr36, Thr39, Gly64, Lys120, Asp122, Ala163, and Lys164. A Mg(2+)-binding site is contributed by Thr21. 2 short sequence motifs (switch) span residues 30 to 41 (RKFPEDYIPTVF) and 61 to 79 (DTAGQEEYDQLRPLSYSSA). Mg(2+) is bound at residue Thr39. Cys191 is subject to Cysteine methyl ester. Cys191 is lipidated: S-geranylgeranyl cysteine. Residues 192 to 194 (ALL) constitute a propeptide, removed in mature form.

It belongs to the small GTPase superfamily. Rho family. In terms of assembly, interacts (GTP-bound form) with PAK4 (via CRIB domain). Interacts (GTP-bound form) with PAK5 (via CRIB domain). Requires Mg(2+) as cofactor.

The protein resides in the cell membrane. The protein localises to the cytoplasm. It is found in the cytoskeleton. The catalysed reaction is GTP + H2O = GDP + phosphate + H(+). Regulated by guanine nucleotide exchange factors (GEFs) which promote the exchange of bound GDP for free GTP, GTPase activating proteins (GAPs) which increase the GTP hydrolysis activity, and GDP dissociation inhibitors which inhibit the dissociation of the nucleotide from the GTPase. Small GTPase which cycles between active GTP-bound and inactive GDP-bound states. This Entamoeba histolytica (strain ATCC 30459 / HM-1:IMSS / ABRM) protein is Rho-related protein racC.